A 363-amino-acid polypeptide reads, in one-letter code: 3-isopropylmalate dehydrogenase (363 aa).

Position 79–92 (79–92 (GPKWEHLPPNEQPE)) interacts with NAD(+). Residues R100, R110, R139, and D228 each coordinate substrate. Residues D228, D252, and D256 each coordinate Mg(2+). 286 to 298 (GSAPDIAGKNIAN) is a binding site for NAD(+).

The protein belongs to the isocitrate and isopropylmalate dehydrogenases family. LeuB type 1 subfamily. As to quaternary structure, homodimer. Mg(2+) serves as cofactor. It depends on Mn(2+) as a cofactor.

The protein localises to the cytoplasm. It catalyses the reaction (2R,3S)-3-isopropylmalate + NAD(+) = 4-methyl-2-oxopentanoate + CO2 + NADH. Its pathway is amino-acid biosynthesis; L-leucine biosynthesis; L-leucine from 3-methyl-2-oxobutanoate: step 3/4. In terms of biological role, catalyzes the oxidation of 3-carboxy-2-hydroxy-4-methylpentanoate (3-isopropylmalate) to 3-carboxy-4-methyl-2-oxopentanoate. The product decarboxylates to 4-methyl-2 oxopentanoate. The sequence is that of 3-isopropylmalate dehydrogenase from Vibrio cholerae serotype O1 (strain ATCC 39315 / El Tor Inaba N16961).